The primary structure comprises 733 residues: Cell division cycle protein 48 homolog AF_1297 (733 aa).

Residues 223–230 (GPPGTGKT) and 496–503 (GPPGTGKT) each bind ATP.

This sequence belongs to the AAA ATPase family. CDC48 subfamily.

The chain is Cell division cycle protein 48 homolog AF_1297 from Archaeoglobus fulgidus (strain ATCC 49558 / DSM 4304 / JCM 9628 / NBRC 100126 / VC-16).